The primary structure comprises 137 residues: Putative pre-16S rRNA nuclease (137 aa).

This sequence belongs to the YqgF nuclease family.

The protein localises to the cytoplasm. In terms of biological role, could be a nuclease involved in processing of the 5'-end of pre-16S rRNA. The sequence is that of Putative pre-16S rRNA nuclease from Bacillus mycoides (strain KBAB4) (Bacillus weihenstephanensis).